Reading from the N-terminus, the 278-residue chain is Large ribosomal subunit protein uL2 (278 aa).

2 disordered regions span residues 29-55 (PEKSLVRPLHSKGGRNNAGRITVRHQG) and 225-278 (VMNP…NKKR). The span at 258–278 (RSNKKASNKYIVRRRTKNKKR) shows a compositional bias: basic residues.

The protein belongs to the universal ribosomal protein uL2 family. As to quaternary structure, part of the 50S ribosomal subunit. Forms a bridge to the 30S subunit in the 70S ribosome. The N-terminus is blocked. Post-translationally, phosphorylated on serine and threonine residues.

One of the primary rRNA binding proteins. Required for association of the 30S and 50S subunits to form the 70S ribosome, for tRNA binding and peptide bond formation. It has been suggested to have peptidyltransferase activity; this is somewhat controversial. Makes several contacts with the 16S rRNA in the 70S ribosome. This is Large ribosomal subunit protein uL2 from Streptomyces collinus.